The sequence spans 158 residues: Small ribosomal subunit protein uS7 (158 aa).

The protein belongs to the universal ribosomal protein uS7 family. Part of the 30S ribosomal subunit. Contacts proteins S9 and S11.

In terms of biological role, one of the primary rRNA binding proteins, it binds directly to 16S rRNA where it nucleates assembly of the head domain of the 30S subunit. Is located at the subunit interface close to the decoding center, probably blocks exit of the E-site tRNA. In Granulibacter bethesdensis (strain ATCC BAA-1260 / CGDNIH1), this protein is Small ribosomal subunit protein uS7.